We begin with the raw amino-acid sequence, 101 residues long: Integration host factor subunit beta (101 aa).

Belongs to the bacterial histone-like protein family. As to quaternary structure, heterodimer of an alpha and a beta chain.

In terms of biological role, this protein is one of the two subunits of integration host factor, a specific DNA-binding protein that functions in genetic recombination as well as in transcriptional and translational control. In Nitrobacter hamburgensis (strain DSM 10229 / NCIMB 13809 / X14), this protein is Integration host factor subunit beta.